The primary structure comprises 389 residues: Inner membrane transport protein YdhP (389 aa).

Residues 1 to 6 (MKINYP) are Cytoplasmic-facing. The helical transmembrane segment at 7-27 (LLALAIGAFGIGTTEFSPMGL) threads the bilayer. The Periplasmic segment spans residues 28–43 (LPVIARGVDVSIPAAG). A helical membrane pass occupies residues 44 to 64 (MLISAYAVGVMVGAPLMTLLL). Topologically, residues 65–70 (SHRARR) are cytoplasmic. A helical transmembrane segment spans residues 71–91 (SALIFLMAIFTLGNVLSAIAP). At 92-100 (DYMTLMLSR) the chain is on the periplasmic side. A helical membrane pass occupies residues 101 to 121 (ILTSLNHGAFFGLGSVVAASV). The Cytoplasmic segment spans residues 122–130 (VPKHKQASA). Residues 131–151 (VATMFMGLTLANIGGVPAATW) traverse the membrane as a helical segment. The Periplasmic segment spans residues 152-159 (LGETIGWR). The helical transmembrane segment at 160 to 180 (MSFLATAGLGVISMVSLFFSL) threads the bilayer. The Cytoplasmic portion of the chain corresponds to 181-203 (PKGGAGARPEVKKELAVLMRPQV). The helical transmembrane segment at 204-224 (LSALLTTVLGAGAMFTLYTYI) threads the bilayer. Residues 225 to 236 (SPVLQSITHATP) are Periplasmic-facing. Residues 237-257 (VFVTAMLVLIGVGFSIGNYLG) traverse the membrane as a helical segment. The Cytoplasmic portion of the chain corresponds to 258–266 (GKLADRSVN). The helical transmembrane segment at 267-287 (GTLKGFLLLLMVIMLAIPFLA) threads the bilayer. Residues 288–290 (RNE) are Periplasmic-facing. The helical transmembrane segment at 291–311 (FGAAISMVVWGAATFAVVPPL) threads the bilayer. Topologically, residues 312 to 330 (QMRVMRVASEAPGLSSSVN) are cytoplasmic. A helical membrane pass occupies residues 331–351 (IGAFNLGNALGAAAGGAVISA). At 352–356 (GLGYS) the chain is on the periplasmic side. The chain crosses the membrane as a helical span at residues 357–377 (FVPVMGAIVAGLALLLVFMSA). Over 378-389 (RKQPETVCVANS) the chain is Cytoplasmic.

It belongs to the major facilitator superfamily.

The protein localises to the cell inner membrane. This is Inner membrane transport protein YdhP (ydhP) from Escherichia coli (strain K12).